An 86-amino-acid chain; its full sequence is Anti-adapter protein IraP (86 aa).

Residues 1-36 (MKNLISELLLRLAQKEEESKELVAQVEALEIIVTAM) adopt a coiled-coil conformation.

It belongs to the IraP family. As to quaternary structure, interacts with RssB.

Its subcellular location is the cytoplasm. In terms of biological role, inhibits RpoS proteolysis by regulating RssB activity, thereby increasing the stability of the sigma stress factor RpoS especially during phosphate starvation, but also in stationary phase and during nitrogen starvation. Its effect on RpoS stability is due to its interaction with RssB, which probably blocks the interaction of RssB with RpoS, and the consequent delivery of the RssB-RpoS complex to the ClpXP protein degradation pathway. In Citrobacter koseri (strain ATCC BAA-895 / CDC 4225-83 / SGSC4696), this protein is Anti-adapter protein IraP.